A 297-amino-acid chain; its full sequence is Phosphatidylserine decarboxylase proenzyme (297 aa).

Active-site charge relay system; for autoendoproteolytic cleavage activity residues include Asp90, His147, and Ser252. Ser252 functions as the Schiff-base intermediate with substrate; via pyruvic acid; for decarboxylase activity in the catalytic mechanism. A Pyruvic acid (Ser); by autocatalysis modification is found at Ser252.

The protein belongs to the phosphatidylserine decarboxylase family. PSD-B subfamily. Prokaryotic type I sub-subfamily. As to quaternary structure, heterodimer of a large membrane-associated beta subunit and a small pyruvoyl-containing alpha subunit. Pyruvate is required as a cofactor. In terms of processing, is synthesized initially as an inactive proenzyme. Formation of the active enzyme involves a self-maturation process in which the active site pyruvoyl group is generated from an internal serine residue via an autocatalytic post-translational modification. Two non-identical subunits are generated from the proenzyme in this reaction, and the pyruvate is formed at the N-terminus of the alpha chain, which is derived from the carboxyl end of the proenzyme. The autoendoproteolytic cleavage occurs by a canonical serine protease mechanism, in which the side chain hydroxyl group of the serine supplies its oxygen atom to form the C-terminus of the beta chain, while the remainder of the serine residue undergoes an oxidative deamination to produce ammonia and the pyruvoyl prosthetic group on the alpha chain. During this reaction, the Ser that is part of the protease active site of the proenzyme becomes the pyruvoyl prosthetic group, which constitutes an essential element of the active site of the mature decarboxylase.

It is found in the cell membrane. It catalyses the reaction a 1,2-diacyl-sn-glycero-3-phospho-L-serine + H(+) = a 1,2-diacyl-sn-glycero-3-phosphoethanolamine + CO2. It participates in phospholipid metabolism; phosphatidylethanolamine biosynthesis; phosphatidylethanolamine from CDP-diacylglycerol: step 2/2. Functionally, catalyzes the formation of phosphatidylethanolamine (PtdEtn) from phosphatidylserine (PtdSer). The protein is Phosphatidylserine decarboxylase proenzyme of Stutzerimonas stutzeri (strain A1501) (Pseudomonas stutzeri).